The following is an 89-amino-acid chain: Small ribosomal subunit protein uS15 (89 aa).

This sequence belongs to the universal ribosomal protein uS15 family. In terms of assembly, part of the 30S ribosomal subunit. Forms a bridge to the 50S subunit in the 70S ribosome, contacting the 23S rRNA.

One of the primary rRNA binding proteins, it binds directly to 16S rRNA where it helps nucleate assembly of the platform of the 30S subunit by binding and bridging several RNA helices of the 16S rRNA. In terms of biological role, forms an intersubunit bridge (bridge B4) with the 23S rRNA of the 50S subunit in the ribosome. This Streptococcus pyogenes serotype M2 (strain MGAS10270) protein is Small ribosomal subunit protein uS15.